The chain runs to 891 residues: Aconitate hydratase A (891 aa).

Residues Cys435, Cys501, and Cys504 each coordinate [4Fe-4S] cluster.

Belongs to the aconitase/IPM isomerase family. In terms of assembly, monomer. Requires [4Fe-4S] cluster as cofactor.

It carries out the reaction citrate = D-threo-isocitrate. The enzyme catalyses (2S,3R)-3-hydroxybutane-1,2,3-tricarboxylate = 2-methyl-cis-aconitate + H2O. The protein operates within carbohydrate metabolism; tricarboxylic acid cycle; isocitrate from oxaloacetate: step 2/2. Its pathway is organic acid metabolism; propanoate degradation. Its function is as follows. Involved in the catabolism of short chain fatty acids (SCFA) via the tricarboxylic acid (TCA)(acetyl degradation route) and probably the 2-methylcitrate cycle I (propionate degradation route). Catalyzes the reversible isomerization of citrate to isocitrate via cis-aconitate. The apo form of AcnA functions as a RNA-binding regulatory protein. Could catalyze the hydration of 2-methyl-cis-aconitate to yield (2R,3S)-2-methylisocitrate. The chain is Aconitate hydratase A (acn) from Legionella pneumophila subsp. pneumophila (strain Philadelphia 1 / ATCC 33152 / DSM 7513).